The sequence spans 292 residues: AT-hook motif nuclear-localized protein 23 (292 aa).

Positions 23–100 (HLHHNSSSDD…SKNKPKPPVI (78 aa)) are disordered. A compositionally biased stretch (gly residues) spans 60 to 79 (SGGGSGSSGGGGGHGGGGDV). The a.T hook DNA-binding region spans 82–94 (RRPRGRPPGSKNK). In terms of domain architecture, PPC spans 106 to 242 (ANTLRAHILE…EDEQQQQLGG (137 aa)).

It localises to the nucleus. Its function is as follows. Transcription factor that specifically binds AT-rich DNA sequences related to the nuclear matrix attachment regions (MARs). The sequence is that of AT-hook motif nuclear-localized protein 23 from Arabidopsis thaliana (Mouse-ear cress).